Reading from the N-terminus, the 293-residue chain is Biphenyl-2,3-diol 1,2-dioxygenase (293 aa).

VOC domains follow at residues 5–119 (RLGY…IYYG) and 143–265 (GIGH…FGWG). Fe cation is bound by residues His146, His210, and Glu261.

It belongs to the extradiol ring-cleavage dioxygenase family. As to quaternary structure, homooctamer. It depends on Fe(2+) as a cofactor.

It carries out the reaction biphenyl-2,3-diol + O2 = 2-hydroxy-6-oxo-6-phenylhexa-2,4-dienoate + H(+). It participates in xenobiotic degradation; biphenyl degradation; 2-hydroxy-2,4-pentadienoate and benzoate from biphenyl: step 3/4. This chain is Biphenyl-2,3-diol 1,2-dioxygenase (bphC), found in Pseudomonas sp. (strain KKS102).